Consider the following 997-residue polypeptide: Translation initiation factor IF-2 (997 aa).

The interval 101–409 (ELAAEQAAAR…QHQDRRHEQV (309 aa)) is disordered. 3 stretches are compositionally biased toward low complexity: residues 116 to 185 (AEAV…QAEP), 195 to 208 (AAPA…VEPA), and 244 to 280 (PSAP…PAAP). The span at 281–292 (DRAREEARRAAE) shows a compositional bias: basic and acidic residues. The segment covering 385-394 (RAGGKGGRGG) has biased composition (gly residues). Over residues 400–409 (QHQDRRHEQV) the composition is skewed to basic and acidic residues. A tr-type G domain is found at 498 to 665 (PRAPVVTVMG…NVLLQAEILE (168 aa)). A G1 region spans residues 507–514 (GHVDHGKT). 507-514 (GHVDHGKT) serves as a coordination point for GTP. Positions 532–536 (GITQH) are G2. The segment at 553 to 556 (DTPG) is G3. GTP is bound by residues 553–557 (DTPGH) and 607–610 (NKID). Residues 607-610 (NKID) are G4. Residues 643–645 (SAK) form a G5 region.

Belongs to the TRAFAC class translation factor GTPase superfamily. Classic translation factor GTPase family. IF-2 subfamily.

The protein resides in the cytoplasm. In terms of biological role, one of the essential components for the initiation of protein synthesis. Protects formylmethionyl-tRNA from spontaneous hydrolysis and promotes its binding to the 30S ribosomal subunits. Also involved in the hydrolysis of GTP during the formation of the 70S ribosomal complex. This chain is Translation initiation factor IF-2, found in Bordetella bronchiseptica (strain ATCC BAA-588 / NCTC 13252 / RB50) (Alcaligenes bronchisepticus).